The primary structure comprises 109 residues: Membrane-bound lysozyme inhibitor of C-type lysozyme (109 aa).

The N-terminal stretch at 1 to 17 is a signal peptide; sequence MTMKKLLIIILPVLLSG. C18 carries N-palmitoyl cysteine lipidation. C18 carries S-diacylglycerol cysteine lipidation. C37 and C102 are oxidised to a cystine.

This sequence belongs to the MliC family. Type 1 subfamily. Monomer.

Its subcellular location is the cell outer membrane. Specifically inhibits C-type lysozymes. This Escherichia coli (strain K12) protein is Membrane-bound lysozyme inhibitor of C-type lysozyme.